The following is a 367-amino-acid chain: Pectate trisaccharide-lyase (367 aa).

Residues Met1–Ala27 form the signal peptide. 3 residues coordinate Ca(2+): Asp144, Asp166, and Asp170. Residues Ser151–Lys173 form a PbH1 1 repeat. Residue Arg224 is part of the active site. The PbH1 2 repeat unit spans residues Gly263–Pro289.

The protein belongs to the polysaccharide lyase 1 family. In terms of assembly, homotetramer. Ca(2+) serves as cofactor.

The protein localises to the secreted. It carries out the reaction eliminative cleavage of unsaturated trigalacturonate as the major product from the reducing end of polygalacturonic acid/pectate.. Its activity is regulated as follows. Completely inactivated by EGTA. Its function is as follows. Cleaves unsaturated trigalacturonate from pectin. Activity is highest towards polygalacturonic acid, activity on methylated pectins decreases with an increasing degree of methylation. This chain is Pectate trisaccharide-lyase, found in Thermotoga maritima (strain ATCC 43589 / DSM 3109 / JCM 10099 / NBRC 100826 / MSB8).